The chain runs to 341 residues: S-adenosylmethionine:tRNA ribosyltransferase-isomerase (341 aa).

The protein belongs to the QueA family. As to quaternary structure, monomer.

The protein resides in the cytoplasm. It carries out the reaction 7-aminomethyl-7-carbaguanosine(34) in tRNA + S-adenosyl-L-methionine = epoxyqueuosine(34) in tRNA + adenine + L-methionine + 2 H(+). The protein operates within tRNA modification; tRNA-queuosine biosynthesis. Its function is as follows. Transfers and isomerizes the ribose moiety from AdoMet to the 7-aminomethyl group of 7-deazaguanine (preQ1-tRNA) to give epoxyqueuosine (oQ-tRNA). In Staphylococcus saprophyticus subsp. saprophyticus (strain ATCC 15305 / DSM 20229 / NCIMB 8711 / NCTC 7292 / S-41), this protein is S-adenosylmethionine:tRNA ribosyltransferase-isomerase.